Reading from the N-terminus, the 301-residue chain is Acetylglutamate kinase (301 aa).

Substrate-binding positions include 71–72, arginine 93, and asparagine 198; that span reads GG.

Belongs to the acetylglutamate kinase family. ArgB subfamily.

Its subcellular location is the cytoplasm. The enzyme catalyses N-acetyl-L-glutamate + ATP = N-acetyl-L-glutamyl 5-phosphate + ADP. It participates in amino-acid biosynthesis; L-arginine biosynthesis; N(2)-acetyl-L-ornithine from L-glutamate: step 2/4. In terms of biological role, catalyzes the ATP-dependent phosphorylation of N-acetyl-L-glutamate. The chain is Acetylglutamate kinase from Zymomonas mobilis subsp. mobilis (strain ATCC 31821 / ZM4 / CP4).